The primary structure comprises 115 residues: UPF0295 protein BLi00901/BL05075 (115 aa).

A run of 2 helical transmembrane segments spans residues 18–38 and 41–61; these read LVFIGFIIMYVGVFFRSSVLL and VFMILGVLSILLSTAVYFWIG.

It belongs to the UPF0295 family.

It is found in the cell membrane. This is UPF0295 protein BLi00901/BL05075 from Bacillus licheniformis (strain ATCC 14580 / DSM 13 / JCM 2505 / CCUG 7422 / NBRC 12200 / NCIMB 9375 / NCTC 10341 / NRRL NRS-1264 / Gibson 46).